The chain runs to 155 residues: SsrA-binding protein (155 aa).

Belongs to the SmpB family.

The protein resides in the cytoplasm. Required for rescue of stalled ribosomes mediated by trans-translation. Binds to transfer-messenger RNA (tmRNA), required for stable association of tmRNA with ribosomes. tmRNA and SmpB together mimic tRNA shape, replacing the anticodon stem-loop with SmpB. tmRNA is encoded by the ssrA gene; the 2 termini fold to resemble tRNA(Ala) and it encodes a 'tag peptide', a short internal open reading frame. During trans-translation Ala-aminoacylated tmRNA acts like a tRNA, entering the A-site of stalled ribosomes, displacing the stalled mRNA. The ribosome then switches to translate the ORF on the tmRNA; the nascent peptide is terminated with the 'tag peptide' encoded by the tmRNA and targeted for degradation. The ribosome is freed to recommence translation, which seems to be the essential function of trans-translation. This Chelativorans sp. (strain BNC1) protein is SsrA-binding protein.